The chain runs to 209 residues: Elongation factor Ts, chloroplastic (209 aa).

Belongs to the EF-Ts family.

The protein localises to the plastid. It is found in the chloroplast. Its function is as follows. Associates with the EF-Tu.GDP complex and induces the exchange of GDP to GTP. It remains bound to the aminoacyl-tRNA.EF-Tu.GTP complex up to the GTP hydrolysis stage on the ribosome. In Cyanidioschyzon merolae (strain NIES-3377 / 10D) (Unicellular red alga), this protein is Elongation factor Ts, chloroplastic (tsf).